We begin with the raw amino-acid sequence, 208 residues long: Small ribosomal subunit protein uS4 (208 aa).

The disordered stretch occupies residues 29 to 48 (MERRPYGPGQHGRARRKQDS). One can recognise an S4 RNA-binding domain in the interval 95-155 (QRLDALVLRA…ERSEKMVPFQ (61 aa)).

This sequence belongs to the universal ribosomal protein uS4 family. In terms of assembly, part of the 30S ribosomal subunit. Contacts protein S5. The interaction surface between S4 and S5 is involved in control of translational fidelity.

In terms of biological role, one of the primary rRNA binding proteins, it binds directly to 16S rRNA where it nucleates assembly of the body of the 30S subunit. Functionally, with S5 and S12 plays an important role in translational accuracy. The sequence is that of Small ribosomal subunit protein uS4 from Micrococcus luteus (strain ATCC 4698 / DSM 20030 / JCM 1464 / CCM 169 / CCUG 5858 / IAM 1056 / NBRC 3333 / NCIMB 9278 / NCTC 2665 / VKM Ac-2230) (Micrococcus lysodeikticus).